Reading from the N-terminus, the 476-residue chain is tRNA(Ile)-lysidine synthase (476 aa).

ATP is bound at residue 30–35 (SGGPDS).

It belongs to the tRNA(Ile)-lysidine synthase family.

It is found in the cytoplasm. It carries out the reaction cytidine(34) in tRNA(Ile2) + L-lysine + ATP = lysidine(34) in tRNA(Ile2) + AMP + diphosphate + H(+). In terms of biological role, ligates lysine onto the cytidine present at position 34 of the AUA codon-specific tRNA(Ile) that contains the anticodon CAU, in an ATP-dependent manner. Cytidine is converted to lysidine, thus changing the amino acid specificity of the tRNA from methionine to isoleucine. In Bacillus thuringiensis subsp. konkukian (strain 97-27), this protein is tRNA(Ile)-lysidine synthase.